The sequence spans 452 residues: GTPase Der (452 aa).

EngA-type G domains lie at 4-169 (PIVA…PAPQ) and 177-352 (IKVA…QEHR). GTP is bound by residues 10–17 (GRPNVGKS), 57–61 (DTGGL), 120–123 (NKCE), 183–190 (GRPNVGKS), 230–234 (DTAGI), and 295–298 (NKWD). The KH-like domain maps to 353–439 (RRVTTAVINE…IRLFWRGKKV (87 aa)).

It belongs to the TRAFAC class TrmE-Era-EngA-EngB-Septin-like GTPase superfamily. EngA (Der) GTPase family. As to quaternary structure, associates with the 50S ribosomal subunit.

Its function is as follows. GTPase that plays an essential role in the late steps of ribosome biogenesis. This chain is GTPase Der, found in Synechocystis sp. (strain ATCC 27184 / PCC 6803 / Kazusa).